The sequence spans 407 residues: 1-deoxy-D-xylulose 5-phosphate reductoisomerase (407 aa).

6 residues coordinate NADPH: Thr-25, Gly-26, Ser-27, Ile-28, Asn-53, and Asn-136. Lys-137 contacts 1-deoxy-D-xylulose 5-phosphate. Glu-138 serves as a coordination point for NADPH. Asp-162 is a binding site for Mn(2+). Positions 163, 164, 188, and 211 each coordinate 1-deoxy-D-xylulose 5-phosphate. Residue Glu-164 participates in Mn(2+) binding. Gly-217 provides a ligand contact to NADPH. Ser-224, Asn-229, Lys-230, and Glu-233 together coordinate 1-deoxy-D-xylulose 5-phosphate. Glu-233 lines the Mn(2+) pocket.

It belongs to the DXR family. The cofactor is Mg(2+). Mn(2+) is required as a cofactor.

It carries out the reaction 2-C-methyl-D-erythritol 4-phosphate + NADP(+) = 1-deoxy-D-xylulose 5-phosphate + NADPH + H(+). The protein operates within isoprenoid biosynthesis; isopentenyl diphosphate biosynthesis via DXP pathway; isopentenyl diphosphate from 1-deoxy-D-xylulose 5-phosphate: step 1/6. Functionally, catalyzes the NADPH-dependent rearrangement and reduction of 1-deoxy-D-xylulose-5-phosphate (DXP) to 2-C-methyl-D-erythritol 4-phosphate (MEP). The polypeptide is 1-deoxy-D-xylulose 5-phosphate reductoisomerase (Rhodopseudomonas palustris (strain BisB5)).